The sequence spans 342 residues: Ribosomal RNA small subunit methyltransferase C (342 aa).

It belongs to the methyltransferase superfamily. RsmC family. Monomer.

The protein localises to the cytoplasm. The catalysed reaction is guanosine(1207) in 16S rRNA + S-adenosyl-L-methionine = N(2)-methylguanosine(1207) in 16S rRNA + S-adenosyl-L-homocysteine + H(+). In terms of biological role, specifically methylates the guanine in position 1207 of 16S rRNA in the 30S particle. This is Ribosomal RNA small subunit methyltransferase C from Salmonella choleraesuis (strain SC-B67).